Here is a 359-residue protein sequence, read N- to C-terminus: Phosphoserine aminotransferase (359 aa).

Arginine 41 serves as a coordination point for L-glutamate. Pyridoxal 5'-phosphate-binding positions include 75–76, tryptophan 101, threonine 151, aspartate 171, and glutamine 194; that span reads AS. At lysine 195 the chain carries N6-(pyridoxal phosphate)lysine. 236 to 237 is a binding site for pyridoxal 5'-phosphate; the sequence is NT.

It belongs to the class-V pyridoxal-phosphate-dependent aminotransferase family. SerC subfamily. In terms of assembly, homodimer. Pyridoxal 5'-phosphate is required as a cofactor.

The protein resides in the cytoplasm. The catalysed reaction is O-phospho-L-serine + 2-oxoglutarate = 3-phosphooxypyruvate + L-glutamate. The enzyme catalyses 4-(phosphooxy)-L-threonine + 2-oxoglutarate = (R)-3-hydroxy-2-oxo-4-phosphooxybutanoate + L-glutamate. Its pathway is amino-acid biosynthesis; L-serine biosynthesis; L-serine from 3-phospho-D-glycerate: step 2/3. It functions in the pathway cofactor biosynthesis; pyridoxine 5'-phosphate biosynthesis; pyridoxine 5'-phosphate from D-erythrose 4-phosphate: step 3/5. Its function is as follows. Catalyzes the reversible conversion of 3-phosphohydroxypyruvate to phosphoserine and of 3-hydroxy-2-oxo-4-phosphonooxybutanoate to phosphohydroxythreonine. The sequence is that of Phosphoserine aminotransferase from Thiobacillus denitrificans (strain ATCC 25259 / T1).